The primary structure comprises 295 residues: Aspartate carbamoyltransferase catalytic subunit (295 aa).

The carbamoyl phosphate site is built by Arg54 and Thr55. Lys82 provides a ligand contact to L-aspartate. 3 residues coordinate carbamoyl phosphate: Arg104, His132, and Gln135. L-aspartate-binding residues include Arg165 and Arg218. Carbamoyl phosphate-binding residues include Gly257 and Pro258.

The protein belongs to the aspartate/ornithine carbamoyltransferase superfamily. ATCase family. As to quaternary structure, heterododecamer (2C3:3R2) of six catalytic PyrB chains organized as two trimers (C3), and six regulatory PyrI chains organized as three dimers (R2).

The enzyme catalyses carbamoyl phosphate + L-aspartate = N-carbamoyl-L-aspartate + phosphate + H(+). It functions in the pathway pyrimidine metabolism; UMP biosynthesis via de novo pathway; (S)-dihydroorotate from bicarbonate: step 2/3. Its function is as follows. Catalyzes the condensation of carbamoyl phosphate and aspartate to form carbamoyl aspartate and inorganic phosphate, the committed step in the de novo pyrimidine nucleotide biosynthesis pathway. The sequence is that of Aspartate carbamoyltransferase catalytic subunit from Wolbachia pipientis wMel.